Here is a 366-residue protein sequence, read N- to C-terminus: tRNA/tmRNA (uracil-C(5))-methyltransferase (366 aa).

The S-adenosyl-L-methionine site is built by Gln-190, Tyr-218, Asn-223, Glu-239, and Asp-299. Cys-324 (nucleophile) is an active-site residue. The Proton acceptor role is filled by Glu-358.

Belongs to the class I-like SAM-binding methyltransferase superfamily. RNA M5U methyltransferase family. TrmA subfamily.

The catalysed reaction is uridine(54) in tRNA + S-adenosyl-L-methionine = 5-methyluridine(54) in tRNA + S-adenosyl-L-homocysteine + H(+). It carries out the reaction uridine(341) in tmRNA + S-adenosyl-L-methionine = 5-methyluridine(341) in tmRNA + S-adenosyl-L-homocysteine + H(+). Functionally, dual-specificity methyltransferase that catalyzes the formation of 5-methyluridine at position 54 (m5U54) in all tRNAs, and that of position 341 (m5U341) in tmRNA (transfer-mRNA). The protein is tRNA/tmRNA (uracil-C(5))-methyltransferase of Enterobacter sp. (strain 638).